The primary structure comprises 510 residues: Probable lysine--tRNA ligase, cytoplasmic (510 aa).

Belongs to the class-II aminoacyl-tRNA synthetase family. As to quaternary structure, homodimer.

The protein resides in the cytoplasm. It carries out the reaction tRNA(Lys) + L-lysine + ATP = L-lysyl-tRNA(Lys) + AMP + diphosphate. The sequence is that of Probable lysine--tRNA ligase, cytoplasmic from Encephalitozoon cuniculi (strain GB-M1) (Microsporidian parasite).